The sequence spans 367 residues: Alanine racemase (367 aa).

Lys-40 serves as the catalytic Proton acceptor; specific for D-alanine. Lys-40 is modified (N6-(pyridoxal phosphate)lysine). Arg-136 contributes to the substrate binding site. Residue Tyr-263 is the Proton acceptor; specific for L-alanine of the active site. A substrate-binding site is contributed by Met-310.

This sequence belongs to the alanine racemase family. It depends on pyridoxal 5'-phosphate as a cofactor.

It carries out the reaction L-alanine = D-alanine. The protein operates within amino-acid biosynthesis; D-alanine biosynthesis; D-alanine from L-alanine: step 1/1. Functionally, catalyzes the interconversion of L-alanine and D-alanine. May also act on other amino acids. The polypeptide is Alanine racemase (alr) (Streptococcus thermophilus (strain CNRZ 1066)).